The chain runs to 703 residues: Lactococcin-G-processing and transport ATP-binding protein LagD (703 aa).

The 126-residue stretch at 7-132 (QQDEKDCGVA…KEWTGVLLFP (126 aa)) folds into the Peptidase C39 domain. Residue Cys-13 is part of the active site. Residues 153–435 (PILIKQKSLF…IINLQVKMQK (283 aa)) enclose the ABC transmembrane type-1 domain. 7 helical membrane passes run 162-182 (FITI…DNII), 189-209 (TLNI…LFEY), 224-244 (MSIM…FFAT), 267-287 (ATLS…TLAI), 291-311 (QLFL…YVFI), 381-401 (MVIE…YVID), and 409-429 (LITY…IINL). One can recognise an ABC transporter domain in the interval 469–703 (IKLDKVSFSY…EGVYRRLLNA (235 aa)). ATP is bound at residue 502-509 (GVSGSGKS).

This sequence belongs to the ABC transporter superfamily. LagD family. In terms of assembly, homodimer.

It localises to the cell membrane. In terms of biological role, lagD (TC 3.A.1) is involved in processing the signal peptide and probably also in export of the bacteriocin lactococcin G. This is Lactococcin-G-processing and transport ATP-binding protein LagD (lagD) from Lactococcus lactis subsp. lactis (Streptococcus lactis).